Reading from the N-terminus, the 110-residue chain is Large ribosomal subunit protein uL22 (110 aa).

This sequence belongs to the universal ribosomal protein uL22 family. As to quaternary structure, part of the 50S ribosomal subunit.

This protein binds specifically to 23S rRNA; its binding is stimulated by other ribosomal proteins, e.g. L4, L17, and L20. It is important during the early stages of 50S assembly. It makes multiple contacts with different domains of the 23S rRNA in the assembled 50S subunit and ribosome. In terms of biological role, the globular domain of the protein is located near the polypeptide exit tunnel on the outside of the subunit, while an extended beta-hairpin is found that lines the wall of the exit tunnel in the center of the 70S ribosome. The polypeptide is Large ribosomal subunit protein uL22 (Pseudoalteromonas atlantica (strain T6c / ATCC BAA-1087)).